The chain runs to 516 residues: Ribose import ATP-binding protein RbsA (516 aa).

ABC transporter domains lie at 14-250 (LRLT…VGRA) and 261-504 (AKGA…AGIG). 46 to 53 (GENGAGKS) provides a ligand contact to ATP.

It belongs to the ABC transporter superfamily. Ribose importer (TC 3.A.1.2.1) family. The complex is composed of an ATP-binding protein (RbsA), two transmembrane proteins (RbsC) and a solute-binding protein (RbsB).

It is found in the cell inner membrane. The catalysed reaction is D-ribose(out) + ATP + H2O = D-ribose(in) + ADP + phosphate + H(+). Functionally, part of the ABC transporter complex RbsABC involved in ribose import. Responsible for energy coupling to the transport system. The protein is Ribose import ATP-binding protein RbsA of Jannaschia sp. (strain CCS1).